Consider the following 137-residue polypeptide: MLSPKRTKYRKYHRGRMRGKATRGNEVTFGDYGLQALEPTWITSRQIEAARRTITRYTKRGAALWIRIFPDKTVTARAAESRMGSGKGAVDYWVAVVKPGTILFEIASVPEEIAATALHLASYKLPIKTKFITRIKI.

The protein belongs to the universal ribosomal protein uL16 family. In terms of assembly, part of the 50S ribosomal subunit.

It localises to the plastid. Its subcellular location is the chloroplast. In Trieres chinensis (Marine centric diatom), this protein is Large ribosomal subunit protein uL16c.